Consider the following 645-residue polypeptide: Aminopeptidase P1 (645 aa).

Residue serine 2 is modified to N-acetylserine. Residues arginine 69 and histidine 420 each contribute to the a peptide site. Aspartate 440, aspartate 451, and histidine 514 together coordinate Mn(2+). Residues histidine 514, histidine 523, and glutamate 549 each coordinate a peptide. 2 residues coordinate Mn(2+): glutamate 549 and glutamate 563.

This sequence belongs to the peptidase M24B family. Homodimer. Interacts with N-1-naphthylphthalamic acid (NPA). Mn(2+) is required as a cofactor. The cofactor is Zn(2+). In terms of processing, glycosylated. Also present in a non-glycosylated form. Ubiquitous with preferential expression in 5 days-old seedlings, roots, flowers, inflorescences and rosette leaves (at protein levels).

The protein localises to the cytoplasm. Its subcellular location is the cell membrane. It localises to the microsome membrane. The catalysed reaction is Release of any N-terminal amino acid, including proline, that is linked to proline, even from a dipeptide or tripeptide.. Inhibited by EGTA and apstatin, and, to some extent, by the flavonoid kaempferol. Catalyzes the removal of a penultimate prolyl residue from the N-termini of peptides, such as Arg-Pro-Pro. Aminopeptidase that binds to the auxin transport inhibitor N-1-naphthylphthalamic acid (NPA). May play a negative role in the regulation of PIN auxin transport proteins. This Arabidopsis thaliana (Mouse-ear cress) protein is Aminopeptidase P1.